We begin with the raw amino-acid sequence, 312 residues long: Serine/threonine-protein phosphatase PP2A catalytic subunit (312 aa).

Residues Asp60, His62, Asp88, and Asn120 each coordinate Mn(2+). His121 (proton donor) is an active-site residue. Positions 170 and 244 each coordinate Mn(2+).

This sequence belongs to the PPP phosphatase family. PP-2A subfamily. Mn(2+) serves as cofactor.

It localises to the cytoplasm. The enzyme catalyses O-phospho-L-seryl-[protein] + H2O = L-seryl-[protein] + phosphate. The catalysed reaction is O-phospho-L-threonyl-[protein] + H2O = L-threonyl-[protein] + phosphate. The protein is Serine/threonine-protein phosphatase PP2A catalytic subunit of Nicotiana tabacum (Common tobacco).